We begin with the raw amino-acid sequence, 292 residues long: Large ribosomal subunit protein bL19m (292 aa).

The segment at Ser41 to Pro60 is disordered. Ser77 bears the Phosphoserine mark.

Belongs to the bacterial ribosomal protein bL19 family. Component of the mitochondrial ribosome large subunit (39S) which comprises a 16S rRNA and about 50 distinct proteins.

The protein localises to the mitochondrion. This is Large ribosomal subunit protein bL19m (Mrpl19) from Mus musculus (Mouse).